Consider the following 207-residue polypeptide: Small ribosomal subunit protein uS4 (207 aa).

The span at Gln-29 to Pro-38 shows a compositional bias: basic and acidic residues. Residues Gln-29 to Leu-54 are disordered. Residues Gly-42 to Tyr-52 are compositionally biased toward polar residues. In terms of domain architecture, S4 RNA-binding spans Ser-97–Leu-160.

This sequence belongs to the universal ribosomal protein uS4 family. Part of the 30S ribosomal subunit. Contacts protein S5. The interaction surface between S4 and S5 is involved in control of translational fidelity.

Its function is as follows. One of the primary rRNA binding proteins, it binds directly to 16S rRNA where it nucleates assembly of the body of the 30S subunit. With S5 and S12 plays an important role in translational accuracy. This is Small ribosomal subunit protein uS4 from Variovorax paradoxus (strain S110).